A 174-amino-acid polypeptide reads, in one-letter code: UPF0316 protein lwe1794 (174 aa).

Helical transmembrane passes span 4–24, 36–56, and 62–82; these read GLFI…IYTV, LAAL…SLVL, and IANV…GMKI.

Belongs to the UPF0316 family.

Its subcellular location is the cell membrane. The chain is UPF0316 protein lwe1794 from Listeria welshimeri serovar 6b (strain ATCC 35897 / DSM 20650 / CCUG 15529 / CIP 8149 / NCTC 11857 / SLCC 5334 / V8).